An 802-amino-acid chain; its full sequence is MSELTTGRFSISDLDNVQITINNIVGAIEKQSDDIDVEMGPTVKPGVSSLRDWDHNILDRYNPVYTPMCDQCCYCTFGPCDLSGNKEGACGINLEGHNAREFMLRVITGAAAHSGHGRHLLHHLIGLYGKDHPLDVGATNIIAPNVQLVTGVQPKTLGDLDSVLSYVEEQITQLLAAIHVGQEGAAIDFESKALHGGMIDHVGMEISDIAQISCLDFPKSDEEAPLADIGMGCLDASKPTLIVIGHNVAAVTDIIDYMEDKGLNDKIELGGLCCTALDMTRYKTGDRTLPRAKVVGTLAKELKTIRSGIPDVIIVDEQCIRADVLKEASKLMIPVITTNDKVMYGLKDRSNDSIEDILEDLTTGKEKGALMFDYVKLGELAPRLTMMMSEIRKQKGIKALPTDEELKELADSCVHCLKCEVACPNSLPISEAMTALSEGDLSKFELLHDKCIACGRCEYACPKDIDIVNVIEKSSQRVISEEVGKVRVGRGPISDPEIREEGVNLVLGTTPGIVALVGCSNYPDGTKDLFTIADEMLRRSYIVVVSGCSAMDLGMYKGEDGLTLYEKYPSRFKSGGLLNTGSCVSNAHITGAVIKVASIFAQKNISGNYEEIADYTLNRVGAVGVAWGAYSQKAASIGTGCSRLGIPVILGPHGSKYRRALIAKPYEEEKWKVYDARNGSEMQIPAAPDYLLTTAETVEEMMPMLAKSCIRPSDNNMGRMIKLTHYMELSQKYLGIMPEDWYKFVRTETDLPLAKREKLLKILEEEHGWEIDWKRKKILSGPTMKSDVSAQPTNLKRLCKEA.

[4Fe-4S] cluster is bound by residues Cys-69, Cys-72, Cys-73, Cys-75, Cys-80, and Cys-90. His-113 provides a ligand contact to CO. Residues His-246, Cys-274, and Cys-319 each contribute to the [Ni-4Fe-4S] cluster site. 4Fe-4S ferredoxin-type domains follow at residues 404–432 and 442–473; these read EELK…ISEA and SKFE…VIEK. 8 residues coordinate [4Fe-4S] cluster: Cys-413, Cys-416, Cys-419, Cys-423, Cys-451, Cys-454, Cys-457, and Cys-461. The [Ni-4Fe-4S] cluster site is built by Cys-519, Cys-548, and Cys-583.

Belongs to the Ni-containing carbon monoxide dehydrogenase family. In terms of assembly, heterotetramer of two alpha and two epsilon subunits. The ACDS complex is made up of alpha, epsilon, beta, gamma and delta subunits with a probable stoichiometry of (alpha(2)epsilon(2))(4)-beta(8)-(gamma(1)delta(1))(8). [4Fe-4S] cluster is required as a cofactor. The cofactor is [Ni-4Fe-4S] cluster.

The catalysed reaction is CO + 2 oxidized [2Fe-2S]-[ferredoxin] + H2O = 2 reduced [2Fe-2S]-[ferredoxin] + CO2 + 2 H(+). It participates in one-carbon metabolism; methanogenesis from acetate. Functionally, part of the ACDS complex that catalyzes the reversible cleavage of acetyl-CoA, allowing growth on acetate as sole source of carbon and energy. The alpha-epsilon subcomponent functions as a carbon monoxide dehydrogenase. This Methanococcoides burtonii (strain DSM 6242 / NBRC 107633 / OCM 468 / ACE-M) protein is Acetyl-CoA decarbonylase/synthase complex subunit alpha.